Reading from the N-terminus, the 819-residue chain is Outer membrane usher protein CssD (819 aa).

It belongs to the fimbrial export usher family.

It localises to the cell outer membrane. Functionally, involved in the export and assembly of C6 fimbrial subunits across the outer membrane. This is Outer membrane usher protein CssD (cssD) from Escherichia coli.